We begin with the raw amino-acid sequence, 140 residues long: MAIERTFSMIKPDATKRNLTGAITKMLEDAGLRVVASKRVWMSRREAEGFYAVHKDRPFFGELVEFMSSGPTVVQVLEGENAIAKNREVMGATNPANAAEGTIRKVHALSIGENSVHGSDAPETAAEEIAYWFSGTEIVG.

Lys-11, Phe-59, Arg-87, Thr-93, Arg-104, and Asn-114 together coordinate ATP. His-117 acts as the Pros-phosphohistidine intermediate in catalysis.

This sequence belongs to the NDK family. As to quaternary structure, homotetramer. Mg(2+) is required as a cofactor.

The protein localises to the cytoplasm. It carries out the reaction a 2'-deoxyribonucleoside 5'-diphosphate + ATP = a 2'-deoxyribonucleoside 5'-triphosphate + ADP. The catalysed reaction is a ribonucleoside 5'-diphosphate + ATP = a ribonucleoside 5'-triphosphate + ADP. Functionally, major role in the synthesis of nucleoside triphosphates other than ATP. The ATP gamma phosphate is transferred to the NDP beta phosphate via a ping-pong mechanism, using a phosphorylated active-site intermediate. This Sinorhizobium medicae (strain WSM419) (Ensifer medicae) protein is Nucleoside diphosphate kinase.